The primary structure comprises 303 residues: Hemolysin E (303 aa).

Residues cysteine 87 and cysteine 285 are joined by a disulfide bond. A helical transmembrane segment spans residues 179-199; that stretch reads AGAAAGIVAGPFGLIISYSIA.

It belongs to the hemolysin E family. In terms of assembly, monomer and oligomer. In periplasm, it is present as a monomer, while in outer membrane vesicles, it oligomerizes to form a pore structure that is active. The pore is formed by a dodecamer. In periplasm, it forms a disulfide bond, which prevents the oligomerization. In outer membrane vesicles, the redox status prevents formation of the disulfide bond, leading to oligomerization and pore formation.

The protein localises to the secreted. The protein resides in the periplasm. It is found in the host cell membrane. Toxin, which has some hemolytic activity towards mammalian cells. Acts by forming a pore-like structure upon contact with mammalian cells. The polypeptide is Hemolysin E (hlyE) (Salmonella paratyphi A (strain ATCC 9150 / SARB42)).